The chain runs to 1104 residues: tRNA ligase 1 (1104 aa).

Catalysis depends on Lys-152, which acts as the N6-AMP-lysine intermediate.

Belongs to the TRL1 family. Mg(2+) serves as cofactor. In terms of tissue distribution, mainly expressed in proliferating cells and tissues such as root meristems, the vasculature of developing plantlets, flowers and elongating tissue.

Its subcellular location is the nucleus. It is found in the cytoplasm. It catalyses the reaction ATP + (ribonucleotide)n-3'-hydroxyl + 5'-phospho-(ribonucleotide)m = (ribonucleotide)n+m + AMP + diphosphate.. Its activity is regulated as follows. Requires the presence of NTP, preferentially ATP rather than dATP, UTP, CTP and GTP, respectively, to mediate ribonucleotide 5'-phosphorylation. Essential component of stress-response pathways entailing repair of RNA breaks with 2',3'-cyclic phosphate and 5'-OH ends. Tri-functional enzyme that repairs RNA breaks with 2',3'-cyclic-PO(4) and 5'-OH ends. The ligation activity requires three sequential enzymatic activities: opening of the 2'3'-cyclic phosphodiester bond of the 5' half-tRNA leaving a 2'-phosphomonoester (CPDase activity), phosphorylation of the 5' terminus of the 3' half-tRNA in the presence of ATP (kinase activity) and ligation of the two tRNA halves in an ATP-dependent reaction (ligase activity). Deficient in transferring AMP to pRNA(OH) to form AppRNA(OH) but proficient at sealing pre-adenylylated AppRNA(OH). CPDase and kinase reactions are almost insensitive to RNA length, whereas the ligase activity decreases with shorter RNA size. Can also splice DNA ended by a single 3'-terminal ribonucleoside 2',3'-cyclic-PO(4). Binds to mRNA, mature and immature. Exhibits tRNA ligase activity in vitro. Required for the splicing of precursor tRNA molecules containing introns. Can circularize an intron cleaved from a pre-tRNA by splicing endonuclease in vitro. Seems not involved in unfolded protein response (UPR) in the endoplasmic reticulum. Involved in auxin signaling and polar transport during organ morphogenesis. This Arabidopsis thaliana (Mouse-ear cress) protein is tRNA ligase 1.